The primary structure comprises 550 residues: Efflux pump DEP3 (550 aa).

The interval 1 to 33 (MSEQSTLAGPYTEKPGVESQNPTGDGKASFDET) is disordered. 11 consecutive transmembrane segments (helical) span residues 44-64 (AIAY…NTIV), 78-98 (LELI…ILLW), 109-129 (WVYI…GAAP), 139-159 (VIAG…VSVL), 172-192 (STVV…AFAA), 199-219 (WGFY…MILF), 242-262 (AVIF…GGVV), 268-288 (GTII…IVLL), 319-339 (FLAS…FQFI), 351-371 (LLPL…LMPK), and 373-393 (GLIP…SALM). The N-linked (GlcNAc...) asparagine glycan is linked to N399. The next 3 membrane-spanning stretches (helical) occupy residues 410–430 (ILVG…VQSL), 439–459 (AVGA…AICG), and 515–535 (SIWA…WPLF).

Belongs to the major facilitator superfamily. TCR/Tet family.

The protein resides in the cell membrane. Functionally, efflux pump; part of the gene cluster that mediates the biosynthesis of depudecin, a highly oxidized eleven-carbon linear polyketide that acts as a histone deacetylase (HDAC) inhibitor and makes a small contribution to pathogenesis. Is presumed either to be responsible for exporting depudecin, to provide self-protection, or both. The polypeptide is Efflux pump DEP3 (Fusarium langsethiae).